Reading from the N-terminus, the 90-residue chain is Protein LIM1 (90 aa).

Residues 1–26 (MASMKSLATAILVVLLLAALSREGRS) form the signal peptide. Disulfide bonds link Cys29-Cys66, Cys39-Cys55, Cys56-Cys81, and Cys68-Cys88.

Belongs to the A9/FIL1 family.

The protein resides in the secreted. The sequence is that of Protein LIM1 (LIM1) from Lilium longiflorum (Trumpet lily).